Consider the following 501-residue polypeptide: MEKKKKPELSRRDFGKLIIGGGAAATIAPFGVPGANAAEKEKNAAEIRQQFAMTAGSPIIVNDKLERYAEVRTAFTHPTSFFKPNYKGEVKPWFLSAYDEKVRQIENGENGPKMKAKNVGEARAGRALEAAGWTLDINYGNIYPNRFFMLWSGETMTNTQLWAPVGLDRRPPDTTDPVELTNYVKFAARMAGADLVGVARLNRNWVYSEAVTIPADVPYEQSLHKEIEKPIVFKDVPLPIETDDELIIPNTCENVIVAGIAMNREMMQTAPNSMACATTAFCYSRMCMFDMWLCQFIRYMGYYAIPSCNGVGQSVAFAVEAGLGQASRMGACITPEFGPNVRLTKVFTNMPLVPDKPIDFGVTEFCETCKKCARECPSKAITEGPRTFEGRSIHNQSGKLQWQNDYNKCLGYWPESGGYCGVCVAVCPFTKGNIWIHDGVEWLIDNTRFLDPLMLGMDDALGYGAKRNITEVWDGKINTYGLDADHFRDTVSFRKDRVKKS.

The tat-type signal signal peptide spans 1 to 37; it reads MEKKKKPELSRRDFGKLIIGGGAAATIAPFGVPGANA. Corrinoid contacts are provided by residues Ala74, Tyr207, 309 to 314, 329 to 332, and 341 to 343; these read NGVGQS, MGAC, and VRL. Residues 356–386 enclose the 4Fe-4S ferredoxin-type 1 domain; it reads KPIDFGVTEFCETCKKCARECPSKAITEGPR. Residues Cys366, Cys369, Cys372, and Cys376 each contribute to the [4Fe-4S] cluster site. 394 to 401 is a binding site for corrinoid; sequence HNQSGKLQ. [4Fe-4S] cluster is bound at residue Cys409. Tyr419 lines the corrinoid pocket. Residues Cys420, Cys423, and Cys427 each contribute to the [4Fe-4S] cluster site. A 4Fe-4S ferredoxin-type 2 domain is found at 420 to 439; sequence CGVCVAVCPFTKGNIWIHDG.

This sequence belongs to the PceA family. As to quaternary structure, monomer. The cofactor is [4Fe-4S] cluster. It depends on corrinoid as a cofactor. In terms of processing, predicted to be exported by the Tat system. The position of the signal peptide cleavage has not been experimentally proven.

It localises to the cytoplasm. It is found in the cell inner membrane. It catalyses the reaction trichloroethene + chloride + A + H(+) = tetrachloroethene + AH2. It carries out the reaction trichloroethene + AH2 = (Z)-1,2-dichloroethene + chloride + A + H(+). Its activity is regulated as follows. Both the processed and unprocessed enzymes are catalytically active. PCE-dependent growth and PceA activity are inhibited in the presence of high concentrations of 5,6-dimethylbenzimidazole (DMB), probably due to the formation a DMB-containing nor-B12 cofactor. Dechlorination of PCE is stimulated by ammonium ions. Activity is inhibited by chlorinated methanes. In terms of biological role, catalyzes the reductive dechlorination of tetrachloroethene (PCE) to trichloroethene (TCE) and of trichloroethene to cis-1,2-dichloroethene (DCE). In addition, trans-1,3-dichloropropene, 1,1,3-trichloropropene and 2,3-dichloropropene are reduced to a mixture of mono-chloropropenes, 1,1-dichloropropene, and 2-chloropropene, respectively. Is also able to convert brominated phenols such as 4-bromophenol (4-BP), 2,4-dibromophenol (2,4-DBP) and 2,4,6-tribromophenol (2,4,6-TBP). Utilizes formate or pyruvate as electron donors. Titanium(III) citrate could also serve as electron donor. Reduced methyl viologen can act as the artificial electron donor. This chain is Tetrachloroethene reductive dehalogenase, found in Sulfurospirillum multivorans (Dehalospirillum multivorans).